The following is a 255-amino-acid chain: Type III pantothenate kinase (255 aa).

D6 to E13 contacts ATP. Residues Y100 and G107–R110 contribute to the substrate site. Residue D109 is the Proton acceptor of the active site. A K(+)-binding site is contributed by D129. T132 lines the ATP pocket. T184 is a binding site for substrate.

This sequence belongs to the type III pantothenate kinase family. In terms of assembly, homodimer. Requires NH4(+) as cofactor. K(+) serves as cofactor.

It is found in the cytoplasm. The enzyme catalyses (R)-pantothenate + ATP = (R)-4'-phosphopantothenate + ADP + H(+). It functions in the pathway cofactor biosynthesis; coenzyme A biosynthesis; CoA from (R)-pantothenate: step 1/5. Its function is as follows. Catalyzes the phosphorylation of pantothenate (Pan), the first step in CoA biosynthesis. This Persephonella marina (strain DSM 14350 / EX-H1) protein is Type III pantothenate kinase.